The following is a 197-amino-acid chain: MYB-like transcription factor EOBII (197 aa).

HTH myb-type domains lie at 10-62 (DAEV…LNYL) and 63-117 (RPDV…QKHI). 2 DNA-binding regions (H-T-H motif) span residues 38-62 (WNSL…LNYL) and 90-113 (WSKI…RTRI). Residues 125–158 (GQAASSEQNDHQEACTSQMSNGPNDNTIDQTYSP) form a disordered region. The segment covering 138 to 158 (ACTSQMSNGPNDNTIDQTYSP) has biased composition (polar residues).

In terms of tissue distribution, specifically expressed in flowers, mostly in stigmas, petal tubes and petal limbs, and, to a lower extent, in anthers and stamen. Also present at low levels in roots, stems, leaves and sepals.

It is found in the nucleus. Its function is as follows. MYB-type transcription factor controlling the production of volatile organic compounds (VOCs), including floral volatile benzenoids and phenylpropanoids (FVBP), in flowers of fragrant cultivars (e.g. cv. Mitchell and cv. V26) by regulating the expression of ODO1 and EOBI, key regulators of the shikimate pathway, and of several biosynthetic floral scent-related genes including IGS, PAL2 and CFAT. This scent, mostly produced in the evening and night by the petals, attracts the pollinators (e.g. the night-active hawkmoth pollinator Manduca sexta). Binds to and activates the ODO1 and EOBI promoters via MYB binding sites (MBS) 5'-AAACCTAAT-3' and 5'-CTAACT-3'. Regulates the promoters of IGS1, CFAT and PAL2. Controls flowers petal opening by modulating a global transcriptomic switch. The chain is MYB-like transcription factor EOBII from Petunia hybrida (Petunia).